The sequence spans 97 residues: Putative septation protein SpoVG (97 aa).

This sequence belongs to the SpoVG family.

Functionally, essential for sporulation. Interferes with or is a negative regulator of the pathway leading to asymmetric septation. The polypeptide is Putative septation protein SpoVG (Bacillus licheniformis (strain ATCC 14580 / DSM 13 / JCM 2505 / CCUG 7422 / NBRC 12200 / NCIMB 9375 / NCTC 10341 / NRRL NRS-1264 / Gibson 46)).